A 147-amino-acid polypeptide reads, in one-letter code: Hemoglobin subunit delta (147 aa).

The Globin domain maps to 3-147 (HLTGEEKAAV…VANALAHKYH (145 aa)). Heme b-binding residues include H64 and H93.

Belongs to the globin family. Heterotetramer of two delta chains and two alpha chains. As to expression, red blood cells.

The protein is Hemoglobin subunit delta (HBD) of Ailuropoda melanoleuca (Giant panda).